A 671-amino-acid chain; its full sequence is NADH-quinone oxidoreductase subunit G (671 aa).

The 2Fe-2S ferredoxin-type domain maps to 1–78; that stretch reads MIKLNIDGSE…GMVIHTDTPM (78 aa). 4 residues coordinate [2Fe-2S] cluster: cysteine 34, cysteine 45, cysteine 48, and cysteine 62. One can recognise a 4Fe-4S His(Cys)3-ligated-type domain in the interval 78–117; that stretch reads MVKKAREGVMEFLLINHPLDCPICDQGGECDLQDQAFRYG. Residues histidine 94, cysteine 98, cysteine 101, cysteine 107, cysteine 146, cysteine 149, cysteine 152, and cysteine 196 each contribute to the [4Fe-4S] cluster site. The 4Fe-4S Mo/W bis-MGD-type domain maps to 215-271; it reads LKHTASIGVHDAEGSNIRIDSRGDEVMRILPRVNEEINEEWLSDKNRFSYDGLKYQR.

The protein belongs to the complex I 75 kDa subunit family. The cofactor is [2Fe-2S] cluster. [4Fe-4S] cluster serves as cofactor.

The catalysed reaction is a quinone + NADH + 5 H(+)(in) = a quinol + NAD(+) + 4 H(+)(out). Its function is as follows. NDH-1 shuttles electrons from NADH, via FMN and iron-sulfur (Fe-S) centers, to quinones in the respiratory chain. Couples the redox reaction to proton translocation (for every two electrons transferred, four hydrogen ions are translocated across the cytoplasmic membrane), and thus conserves the redox energy in a proton gradient. The protein is NADH-quinone oxidoreductase subunit G (nuoG) of Rickettsia felis (strain ATCC VR-1525 / URRWXCal2) (Rickettsia azadi).